The chain runs to 313 residues: Pre-mRNA-splicing factor 38A (313 aa).

Positions 1–179 (MANRTVKDAN…VLEEAELLDP (179 aa)) are N-terminal protein interaction domain. A coiled-coil region spans residues 172-201 (EEAELLDPRISALEEDLDEVETSEEEDDED). Positions 182–313 (SALEEDLDEV…SHKRSRRGNE (132 aa)) are disordered. Acidic residues predominate over residues 184–202 (LEEDLDEVETSEEEDDEDE). The segment covering 203–224 (KPERMQSPEPHRRSYRDMDRPR) has biased composition (basic and acidic residues). 3 stretches are compositionally biased toward basic residues: residues 225-250 (RSPS…RSPS), 260-294 (HRSK…RSHS), and 302-313 (KKSHKRSRRGNE).

Belongs to the PRP38 family. As to quaternary structure, component of the spliceosome B complex.

It localises to the nucleus. Involved in pre-mRNA splicing as a component of the spliceosome. This is Pre-mRNA-splicing factor 38A (prpf38a) from Danio rerio (Zebrafish).